A 74-amino-acid chain; its full sequence is Mitochondrial import receptor subunit TOM6 homolog (74 aa).

The span at 1-14 (MASSGAGVTAAGSA) shows a compositional bias: low complexity. The interval 1–24 (MASSGAGVTAAGSANEAPEIPDNV) is disordered. The residue at position 2 (Ala2) is an N-acetylalanine.

The protein belongs to the Tom6 family. Forms part of the preprotein translocase complex of the outer mitochondrial membrane (TOM complex) which consists of at least 7 different proteins (TOMM5, TOMM6, TOMM7, TOMM20, TOMM22, TOMM40 and TOMM70).

The protein resides in the mitochondrion outer membrane. The chain is Mitochondrial import receptor subunit TOM6 homolog (TOMM6) from Bos taurus (Bovine).